An 87-amino-acid chain; its full sequence is Large ribosomal subunit protein bL27 (87 aa).

The protein belongs to the bacterial ribosomal protein bL27 family.

This is Large ribosomal subunit protein bL27 from Phocaeicola vulgatus (strain ATCC 8482 / DSM 1447 / JCM 5826 / CCUG 4940 / NBRC 14291 / NCTC 11154) (Bacteroides vulgatus).